A 415-amino-acid polypeptide reads, in one-letter code: Krueppel-like factor 15 (415 aa).

The short motif at 75–83 (SILDFLLSR) is the 9aaTAD element. Residues 172 to 216 (LSAGSHRSHLHPESAGRERCTPPPGGTSGGGAQSAGEGPAHDGPV) are disordered. Residues 181-191 (LHPESAGRERC) are compositionally biased toward basic and acidic residues. 3 C2H2-type zinc fingers span residues 320 to 344 (HKCT…LRRH), 350 to 374 (FACT…RRSH), and 380 to 402 (YQCP…IKVH).

It belongs to the Sp1 C2H2-type zinc-finger protein family. In terms of assembly, interacts with MYOCD. Interacts with EP300. Expressed in aortic smooth muscle cells.

It localises to the nucleus. Transcriptional regulator that binds to the GA element of the CLCNKA promoter. Binds to the KCNIP2 promoter and regulates KCNIP2 circadian expression in the heart. Is a repressor of CCN2 expression, involved in the control of cardiac fibrosis. Is also involved in the control of cardiac hypertrophy acting through the inhibition of MEF2A, GATA4 and MYOCD activity. Is a negative regulator of TP53 acetylation. Inhibits NF-kappa-B activation through repression of EP300-dependent RELA acetylation. Involved in podocyte differentiation. This Mus musculus (Mouse) protein is Krueppel-like factor 15 (Klf15).